Reading from the N-terminus, the 94-residue chain is Aspartyl/glutamyl-tRNA(Asn/Gln) amidotransferase subunit C (94 aa).

It belongs to the GatC family. Heterotrimer of A, B and C subunits.

It carries out the reaction L-glutamyl-tRNA(Gln) + L-glutamine + ATP + H2O = L-glutaminyl-tRNA(Gln) + L-glutamate + ADP + phosphate + H(+). The enzyme catalyses L-aspartyl-tRNA(Asn) + L-glutamine + ATP + H2O = L-asparaginyl-tRNA(Asn) + L-glutamate + ADP + phosphate + 2 H(+). Its function is as follows. Allows the formation of correctly charged Asn-tRNA(Asn) or Gln-tRNA(Gln) through the transamidation of misacylated Asp-tRNA(Asn) or Glu-tRNA(Gln) in organisms which lack either or both of asparaginyl-tRNA or glutaminyl-tRNA synthetases. The reaction takes place in the presence of glutamine and ATP through an activated phospho-Asp-tRNA(Asn) or phospho-Glu-tRNA(Gln). The protein is Aspartyl/glutamyl-tRNA(Asn/Gln) amidotransferase subunit C of Campylobacter jejuni subsp. doylei (strain ATCC BAA-1458 / RM4099 / 269.97).